Reading from the N-terminus, the 1038-residue chain is Probable ubiquitin conjugation factor E4 (1038 aa).

Disordered regions lie at residues 430–459 (ANDA…ASGQ) and 1010–1038 (SHQS…MLID). The segment covering 446–459 (SKEATSSSSNASGQ) has biased composition (low complexity). The U-box domain maps to 940 to 1014 (EIPDEFLDPI…DEFVKSHQSK (75 aa)). A compositionally biased stretch (basic and acidic residues) spans 1017 to 1028 (TSGEDSSNKERI). Positions 1029 to 1038 (QTTNSDMLID) are enriched in polar residues.

Belongs to the ubiquitin conjugation factor E4 family.

It localises to the cytoplasm. The protein resides in the nucleus. It catalyses the reaction S-ubiquitinyl-[E2 ubiquitin-conjugating enzyme]-L-cysteine + [acceptor protein]-L-lysine = [E2 ubiquitin-conjugating enzyme]-L-cysteine + N(6)-ubiquitinyl-[acceptor protein]-L-lysine.. Its pathway is protein modification; protein ubiquitination. Functionally, ubiquitin-protein ligase that may function as an E3 ligase in conjunction with specific E1 and E2 ligases. May also function as an E4 ligase mediating the assembly of polyubiquitin chain assembly on substrates monoubiquitinated by another E3 ubiquitin ligase. The protein is Probable ubiquitin conjugation factor E4 (PUB1) of Arabidopsis thaliana (Mouse-ear cress).